Consider the following 377-residue polypeptide: Serine protease inhibitor (377 aa).

Positions 1–27 (MAALQAAVSSQLAISFFSSLIVPGAEK) are cleaved as a signal peptide. N-linked (GlcNAc...) asparagine glycosylation occurs at N301. Residues 328 to 349 (GTEAAAATGFGVNFMSMPMQVR) form an RCL region. An N-linked (GlcNAc...) asparagine glycan is attached at N361.

The protein belongs to the serpin family.

In terms of biological role, inhibitor of serine proteases. Inhibits chymotrypsin, cathepsin G and human neutrophil elastase. This Cyanea capillata (Lion's mane jellyfish) protein is Serine protease inhibitor.